Reading from the N-terminus, the 179-residue chain is ATP synthase subunit delta (179 aa).

This sequence belongs to the ATPase delta chain family. As to quaternary structure, F-type ATPases have 2 components, F(1) - the catalytic core - and F(0) - the membrane proton channel. F(1) has five subunits: alpha(3), beta(3), gamma(1), delta(1), epsilon(1). F(0) has three main subunits: a(1), b(2) and c(10-14). The alpha and beta chains form an alternating ring which encloses part of the gamma chain. F(1) is attached to F(0) by a central stalk formed by the gamma and epsilon chains, while a peripheral stalk is formed by the delta and b chains.

The protein resides in the cell inner membrane. In terms of biological role, f(1)F(0) ATP synthase produces ATP from ADP in the presence of a proton or sodium gradient. F-type ATPases consist of two structural domains, F(1) containing the extramembraneous catalytic core and F(0) containing the membrane proton channel, linked together by a central stalk and a peripheral stalk. During catalysis, ATP synthesis in the catalytic domain of F(1) is coupled via a rotary mechanism of the central stalk subunits to proton translocation. This protein is part of the stalk that links CF(0) to CF(1). It either transmits conformational changes from CF(0) to CF(1) or is implicated in proton conduction. This is ATP synthase subunit delta from Bordetella petrii (strain ATCC BAA-461 / DSM 12804 / CCUG 43448).